The sequence spans 503 residues: Long-chain-fatty-acid--CoA ligase FadD13 (503 aa).

This sequence belongs to the ATP-dependent AMP-binding enzyme family. Homodimer.

The protein localises to the cell membrane. The enzyme catalyses a long-chain fatty acid + ATP + CoA = a long-chain fatty acyl-CoA + AMP + diphosphate. It functions in the pathway lipid metabolism; fatty acid biosynthesis. Its function is as follows. Required for maintaining the appropriate mycolic acid composition and permeability of the envelope on its exposure to acidic pH. Catalyzes the activation of long-chain fatty acids as acyl-coenzyme A (acyl-CoA), which are then transferred to the multifunctional polyketide synthase (PKS) type III for further chain extension. In Mycobacterium tuberculosis (strain CDC 1551 / Oshkosh), this protein is Long-chain-fatty-acid--CoA ligase FadD13 (fadD13).